An 84-amino-acid polypeptide reads, in one-letter code: Antimicrobial peptide MeuNaTxbeta-2 (84 aa).

A signal peptide spans 1–20 (MMKTVIVLIVFSLVMIVVKS). The LCN-type CS-alpha/beta domain occupies 21–83 (DNGYLLDKYT…LWHYETNRCR (63 aa)). Cystine bridges form between C32/C82, C36/C57, C43/C64, and C47/C66.

As to expression, expressed by the venom gland.

The protein resides in the secreted. In terms of biological role, antimicrobial peptide with activity against both Gram-positive and -negative bacteria. This is Antimicrobial peptide MeuNaTxbeta-2 from Mesobuthus eupeus (Lesser Asian scorpion).